The chain runs to 497 residues: G protein-coupled receptor gprM (497 aa).

Asparagine 3 carries an N-linked (GlcNAc...) asparagine glycan. 5 helical membrane-spanning segments follow: residues 66–86 (ISVA…VLPV), 98–118 (FTLG…PLGV), 138–158 (CAFT…WSFL), 179–199 (WGAL…MLIL), and 221–241 (YWIP…ATMA). An N-linked (GlcNAc...) asparagine glycan is attached at asparagine 259. A run of 2 helical transmembrane segments spans residues 293–313 (VTLV…FIEL) and 357–377 (LLLA…ILFA). An N-linked (GlcNAc...) asparagine glycan is attached at asparagine 421. Residues 428 to 497 (YKSPSPMVRS…APAVYREYDD (70 aa)) are disordered.

The protein belongs to the G-protein coupled receptor GPR1/git3 family. In terms of assembly, interacts with gpaA.

Its subcellular location is the cell membrane. In terms of biological role, g protein-coupled receptor that plays a role in conidiation and regulation of the biosynthesis of secondary metabolites such as dihydroxynaphthalene (DHN)-melanin, via interaction with the G-protein complex alpha subunit gpaA. This Aspergillus fumigatus (strain CBS 144.89 / FGSC A1163 / CEA10) (Neosartorya fumigata) protein is G protein-coupled receptor gprM.